Reading from the N-terminus, the 779-residue chain is Abnormal cell migration protein 10 (779 aa).

Residues 78–97 (NELEADTEEDIAETADDEES) show a composition bias toward acidic residues. Disordered stretches follow at residues 78–105 (NELE…EKTE), 189–217 (SSSR…PQQP), and 242–302 (AASS…NAEE). Positions 189–200 (SSSRENVKSIST) are enriched in polar residues. Low complexity predominate over residues 242-254 (AASSCSSPDGDSA). Positions 256 to 293 (GDSSSTESSNNRCRNSAFSSNDSCRDSLNTPSPTQVSP) are enriched in polar residues. The 91-residue stretch at 317–407 (EAKVTKIFVK…NKLYFMRRPD (91 aa)) folds into the Ras-associating domain. Positions 456–566 (PPEMEGFLYL…WLVALRIAKN (111 aa)) constitute a PH domain. Composition is skewed to polar residues over residues 645–660 (SFSV…SRTS) and 688–698 (RASTSSPTIPQ). The tract at residues 645–763 (SFSVNSCQQS…SPMAPAKNDL (119 aa)) is disordered. Residues 708–729 (PAPPPVASVMRMPPPVTPPKPC) show a composition bias toward pro residues.

It belongs to the MRL family. As to quaternary structure, may interact (via Ras-associating and PH domains) with ced-10 (GTP-bound form).

The protein localises to the perikaryon. In terms of biological role, required cell non-autonomously for proper development of the excretory canals and for the long-range anterior-posterior migrations of embryonic neurons CAN, ALM and HSN. Plays a role, probably downstream of ced-10/rac1, in orientating axonal growth of HSN and AVM neurons in response to guidance cues such as slt-1. May regulate growth cone polarization by promoting asymmetric F-actin assembly. May be involved in signal transduction during cell migration. The protein is Abnormal cell migration protein 10 of Caenorhabditis elegans.